Here is a 367-residue protein sequence, read N- to C-terminus: Developmentally-regulated GTP-binding protein 1 (367 aa).

Residue S2 is modified to N-acetylserine. The segment at 2-16 (SSTLAKIAEIEAEMA) is required for interaction with STK16. K22 is modified ((3S)-3-hydroxylysine). The OBG-type G domain maps to 65-290 (ARIGFVGFPS…LLEKIWDYLK (226 aa)). Residues 71-78 (GFPSVGKS), 96-100 (FTTLT), 117-120 (DLPG), 248-251 (NKID), and 271-273 (SAH) contribute to the GTP site. Mg(2+) is bound by residues S78 and T98. T100 is subject to Phosphothreonine; by STK16. Residues 290–366 (KLVRIYTKPK…EDEDVIQIVK (77 aa)) form the TGS domain.

The protein belongs to the TRAFAC class OBG-HflX-like GTPase superfamily. OBG GTPase family. As to quaternary structure, interacts (via its C-terminal) with TAL1. Interacts with DFRP1/ZC3H15; this interaction prevents DRG1 poly-ubiquitination and degradation by proteasome. DRG1-ZC3H15/DFRP1 complex co-sediments with polysomes. Interacts with STK16. Interacts with JMJD7. Post-translationally, sumoylated by UBE2I in response to MEKK1-mediated stimuli. Hydroxylated (with S stereochemistry) at C-3 of Lys-22 by JMJD7. In terms of processing, phosphorylated at Thr-100 by STK16. Post-translationally, polyubiquitinated; this modification induces proteolytic degradation and is impaired by interaction with ZC3H15.

Its subcellular location is the nucleus. It localises to the cytoplasm. The catalysed reaction is GTP + H2O = GDP + phosphate + H(+). Its activity is regulated as follows. The GTPase activity is enhanced by potassium ions as well as by DFRP1 binding. In terms of biological role, catalyzes the conversion of GTP to GDP through hydrolysis of the gamma-phosphate bond in GTP. Appears to have an intrinsic GTPase activity that is stimulated by ZC3H15/DFRP1 binding likely by increasing the affinity for the potassium ions. When hydroxylated at C-3 of 'Lys-22' by JMJD7, may bind to RNA and play a role in translation. Binds to microtubules and promotes microtubule polymerization and bundling that are required for mitotic spindle assembly during prophase to anaphase transition. GTPase activity is not necessary for these microtubule-related functions. The protein is Developmentally-regulated GTP-binding protein 1 (DRG1) of Bos taurus (Bovine).